The sequence spans 1333 residues: ABC transporter ATP-binding protein/permease PDR18 (1333 aa).

The chain crosses the membrane as a helical span at residues 13–33 (FLEGQTFGDILCLPWTIIKGI). One can recognise an ABC transporter 1 domain in the interval 30–281 (IKGIRERKNR…FENMGYLCPP (252 aa)). 4 N-linked (GlcNAc...) asparagine glycosylation sites follow: asparagine 48, asparagine 144, asparagine 205, and asparagine 350. The next 6 helical transmembrane spans lie at 392–412 (YTVI…SLFY), 425–445 (SGVL…NISF), 474–494 (FPFR…LAGL), 499–519 (GAFF…TSLF), 534–554 (SIAG…IQLP), and 642–662 (FGIM…FTEY). Residues asparagine 697 and asparagine 733 are each glycosylated (N-linked (GlcNAc...) asparagine). Positions 729 to 971 (FIWKNVSFTI…VIKYFEKNGA (243 aa)) constitute an ABC transporter 2 domain. 765–772 (GESGAGKT) contacts ATP. An N-linked (GlcNAc...) asparagine glycan is attached at asparagine 958. 6 helical membrane passes run 1071 to 1091 (LLMI…VNAI), 1092 to 1112 (GLQN…PATN), 1150 to 1170 (PYHL…LGVF), 1178 to 1198 (VFYL…ALMI), 1210 to 1230 (VIVG…QPAS), and 1235 to 1255 (FWTF…LVGL). A glycan (N-linked (GlcNAc...) asparagine) is linked at asparagine 1320.

It belongs to the ABC transporter superfamily. ABCG family. PDR (TC 3.A.1.205) subfamily.

The protein localises to the membrane. The protein is ABC transporter ATP-binding protein/permease PDR18 (PDR18) of Saccharomyces cerevisiae (strain ATCC 204508 / S288c) (Baker's yeast).